Here is a 309-residue protein sequence, read N- to C-terminus: Homoserine O-succinyltransferase (309 aa).

Catalysis depends on Cys-142, which acts as the Acyl-thioester intermediate. Lys-163 and Ser-192 together coordinate substrate. His-235 serves as the catalytic Proton acceptor. Residue Glu-237 is part of the active site. Arg-249 is a binding site for substrate.

Belongs to the MetA family.

It localises to the cytoplasm. It catalyses the reaction L-homoserine + succinyl-CoA = O-succinyl-L-homoserine + CoA. The protein operates within amino-acid biosynthesis; L-methionine biosynthesis via de novo pathway; O-succinyl-L-homoserine from L-homoserine: step 1/1. Its function is as follows. Transfers a succinyl group from succinyl-CoA to L-homoserine, forming succinyl-L-homoserine. The sequence is that of Homoserine O-succinyltransferase from Erwinia tasmaniensis (strain DSM 17950 / CFBP 7177 / CIP 109463 / NCPPB 4357 / Et1/99).